Here is an 89-residue protein sequence, read N- to C-terminus: Small ribosomal subunit protein uS15 (89 aa).

The protein belongs to the universal ribosomal protein uS15 family. Part of the 30S ribosomal subunit. Forms a bridge to the 50S subunit in the 70S ribosome, contacting the 23S rRNA.

Its function is as follows. One of the primary rRNA binding proteins, it binds directly to 16S rRNA where it helps nucleate assembly of the platform of the 30S subunit by binding and bridging several RNA helices of the 16S rRNA. Functionally, forms an intersubunit bridge (bridge B4) with the 23S rRNA of the 50S subunit in the ribosome. The sequence is that of Small ribosomal subunit protein uS15 from Haemophilus influenzae (strain PittGG).